A 429-amino-acid polypeptide reads, in one-letter code: Probable M18 family aminopeptidase 2 (429 aa).

Residues H82, H156, and H401 each coordinate Zn(2+).

This sequence belongs to the peptidase M18 family. The cofactor is Zn(2+).

This Pseudomonas paraeruginosa (strain DSM 24068 / PA7) (Pseudomonas aeruginosa (strain PA7)) protein is Probable M18 family aminopeptidase 2.